Here is a 304-residue protein sequence, read N- to C-terminus: Porphobilinogen deaminase (304 aa).

C240 is subject to S-(dipyrrolylmethanemethyl)cysteine.

It belongs to the HMBS family. Monomer. The cofactor is dipyrromethane.

It catalyses the reaction 4 porphobilinogen + H2O = hydroxymethylbilane + 4 NH4(+). The protein operates within porphyrin-containing compound metabolism; protoporphyrin-IX biosynthesis; coproporphyrinogen-III from 5-aminolevulinate: step 2/4. Its function is as follows. Tetrapolymerization of the monopyrrole PBG into the hydroxymethylbilane pre-uroporphyrinogen in several discrete steps. The protein is Porphobilinogen deaminase of Xanthomonas campestris pv. campestris (strain ATCC 33913 / DSM 3586 / NCPPB 528 / LMG 568 / P 25).